Reading from the N-terminus, the 187-residue chain is Putative manganese efflux pump MntP (187 aa).

Transmembrane regions (helical) follow at residues 3–23, 39–59, 65–85, 106–126, 129–149, and 166–186; these read YYTLWVIAFGLSMDAFAVSVG, IALCFGLFQACMPLLGYYVGS, ISEFDHWIAFALLCVIGINMI, LTMLGVATSIDALAMGVSFAF, VNIWTAAAIIGITTTILSLFG, and LLGGIILIAMGVKVLIEHRVF.

Belongs to the MntP (TC 9.B.29) family.

It is found in the cell inner membrane. In terms of biological role, probably functions as a manganese efflux pump. The chain is Putative manganese efflux pump MntP from Actinobacillus succinogenes (strain ATCC 55618 / DSM 22257 / CCUG 43843 / 130Z).